Here is a 694-residue protein sequence, read N- to C-terminus: Polyphosphate kinase (694 aa).

Position 45 (Asn-45) interacts with ATP. Mg(2+)-binding residues include Arg-367 and Arg-397. His-427 acts as the Phosphohistidine intermediate in catalysis. The ATP site is built by Tyr-460, Arg-553, and His-580.

This sequence belongs to the polyphosphate kinase 1 (PPK1) family. Requires Mg(2+) as cofactor. In terms of processing, an intermediate of this reaction is the autophosphorylated ppk in which a phosphate is covalently linked to a histidine residue through a N-P bond.

The catalysed reaction is [phosphate](n) + ATP = [phosphate](n+1) + ADP. Catalyzes the reversible transfer of the terminal phosphate of ATP to form a long-chain polyphosphate (polyP). The polypeptide is Polyphosphate kinase (Campylobacter jejuni (strain RM1221)).